The chain runs to 341 residues: Cysteine-rich repeat secretory protein 1 (341 aa).

Positions 1–25 are cleaved as a signal peptide; the sequence is MFSLPLHQSKLIFLLSFLLIKTLNA. Gnk2-homologous domains lie at 28–131 and 136–245; these read TYLL…SRKI and DQGP…ATFL. Intrachain disulfides connect C85/C94, C97/C122, C199/C208, and C211/C236. Residues 247–262 show a composition bias toward pro residues; sequence PPPPPPPPPPPPPPPQ. The interval 247–274 is disordered; sequence PPPPPPPPPPPPPPPQRLYGENDTPSSD.

The protein belongs to the cysteine-rich repeat secretory protein family.

Its subcellular location is the secreted. The polypeptide is Cysteine-rich repeat secretory protein 1 (CRRSP1) (Arabidopsis thaliana (Mouse-ear cress)).